Reading from the N-terminus, the 468-residue chain is Bone morphogenetic protein 3 (468 aa).

The first 22 residues, 1–22 (MAGARGLLCLWLGYFCLNLAQG), serve as a signal peptide directing secretion. Positions 23-358 (QRPNLHLPGL…EQTLKKARRK (336 aa)) are excised as a propeptide. The segment at 29–53 (LPGLRETEPSDRATGGSPSPDLRPH) is disordered. N-linked (GlcNAc...) asparagine glycosylation is found at Asn-115, Asn-139, Asn-171, and Asn-216. The disordered stretch occupies residues 314 to 349 (RKPYKSLQTQPPEKSRNKKKQRKGSHQKGQTLQFDE). Residues 329–339 (RNKKKQRKGSH) show a composition bias toward basic residues. A compositionally biased stretch (polar residues) spans 340–349 (QKGQTLQFDE). Cystine bridges form between Cys-366–Cys-433, Cys-395–Cys-465, and Cys-399–Cys-467. The N-linked (GlcNAc...) asparagine glycan is linked to Asn-459.

The protein belongs to the TGF-beta family. Homodimer; disulfide-linked.

The protein resides in the secreted. In terms of biological role, negatively regulates bone density. Antagonizes the ability of certain osteogenic BMPs to induce osteoprogenitor differentiation and ossification. This is Bone morphogenetic protein 3 (Bmp3) from Mus musculus (Mouse).